The sequence spans 153 residues: Aspartate carbamoyltransferase regulatory chain (153 aa).

Positions 109, 114, 138, and 141 each coordinate Zn(2+).

The protein belongs to the PyrI family. In terms of assembly, contains catalytic and regulatory chains. Zn(2+) is required as a cofactor.

In terms of biological role, involved in allosteric regulation of aspartate carbamoyltransferase. The chain is Aspartate carbamoyltransferase regulatory chain from Klebsiella pneumoniae subsp. pneumoniae (strain ATCC 700721 / MGH 78578).